The sequence spans 333 residues: Dehydrodolichyl diphosphate synthase complex subunit DHDDS (333 aa).

Residues Asp-34, Gly-35, Arg-37, Arg-38, and Arg-85 each contribute to the (2E,6E)-farnesyl diphosphate site. Asp-34, Gly-35, Arg-37, Arg-38, Arg-85, Arg-205, Arg-211, and Ser-213 together coordinate isopentenyl diphosphate. Asp-34 contributes to the Mg(2+) binding site.

Belongs to the UPP synthase family. As to quaternary structure, the active dehydrodolichyl diphosphate synthase complex is a heterotetramer composed of a dimer of heterodimer of DHDDS and NUS1. Interacts with NPC2. The cofactor is Mg(2+). Ubiquitous. Expressed at high levels in testis and kidney. Expressed in epididymis (at protein level).

The protein localises to the endoplasmic reticulum membrane. It carries out the reaction n isopentenyl diphosphate + (2E,6E)-farnesyl diphosphate = a di-trans,poly-cis-polyprenyl diphosphate + n diphosphate. Its pathway is protein modification; protein glycosylation. It functions in the pathway lipid metabolism. Its activity is regulated as follows. Activated by phospholipids including cardiolipin, phosphatidylcholine, phosphatidylethanolamine, phosphatidylinositol and phosphatidylserine. With NUS1, forms the dehydrodolichyl diphosphate synthase (DDS) complex, an essential component of the dolichol monophosphate (Dol-P) biosynthetic machinery. Both subunits contribute to enzymatic activity, i.e. condensation of multiple copies of isopentenyl pyrophosphate (IPP) to farnesyl pyrophosphate (FPP) to produce dehydrodolichyl diphosphate (Dedol-PP), a precursor of dolichol phosphate which is utilized as a sugar carrier in protein glycosylation in the endoplasmic reticulum (ER). Synthesizes long-chain polyprenols, mostly of C95 and C100 chain length. Regulates the glycosylation and stability of nascent NPC2, thereby promoting trafficking of LDL-derived cholesterol. This is Dehydrodolichyl diphosphate synthase complex subunit DHDDS from Homo sapiens (Human).